A 197-amino-acid chain; its full sequence is MNYTKAKYIMGAAKVSQLPEDTGVEVAFAGRSNAGKSSALNTLTDQKGLARVSKTPGRTQLINLFDLGDNKRLVDLPGYGYAKVSEAIKKQWQSEMENYLTTRKCLGGIVLLVDSRHELKEFDSLMIEMAISFDLNLHILLTKADKLNNKERAQANKMIESFLKTFIRTDKISYQLFSSLSKMGLDKLKEKLDIWYQ.

Residues 22 to 197 (TGVEVAFAGR…LKEKLDIWYQ (176 aa)) form the EngB-type G domain. Residues 30–37 (GRSNAGKS), 57–61 (GRTQL), 75–78 (DLPG), 142–145 (TKAD), and 177–179 (FSS) contribute to the GTP site. The Mg(2+) site is built by Ser-37 and Thr-59.

This sequence belongs to the TRAFAC class TrmE-Era-EngA-EngB-Septin-like GTPase superfamily. EngB GTPase family. The cofactor is Mg(2+).

Functionally, necessary for normal cell division and for the maintenance of normal septation. The chain is Probable GTP-binding protein EngB from Francisella philomiragia subsp. philomiragia (strain ATCC 25017 / CCUG 19701 / FSC 153 / O#319-036).